A 380-amino-acid chain; its full sequence is Ribosomal RNA large subunit methyltransferase G (380 aa).

The protein belongs to the methyltransferase superfamily. RlmG family.

Its subcellular location is the cytoplasm. It carries out the reaction guanosine(1835) in 23S rRNA + S-adenosyl-L-methionine = N(2)-methylguanosine(1835) in 23S rRNA + S-adenosyl-L-homocysteine + H(+). Its function is as follows. Specifically methylates the guanine in position 1835 (m2G1835) of 23S rRNA. This Aeromonas hydrophila subsp. hydrophila (strain ATCC 7966 / DSM 30187 / BCRC 13018 / CCUG 14551 / JCM 1027 / KCTC 2358 / NCIMB 9240 / NCTC 8049) protein is Ribosomal RNA large subunit methyltransferase G.